We begin with the raw amino-acid sequence, 460 residues long: tRNA modification GTPase MnmE (460 aa).

3 residues coordinate (6S)-5-formyl-5,6,7,8-tetrahydrofolate: Arg-22, Glu-87, and Arg-126. Residues 222 to 381 (GLKTAIIGKP…LENTIYNLVF (160 aa)) form the TrmE-type G domain. Asn-232 contributes to the K(+) binding site. Residues 232–237 (NVGKSS), 251–257 (TDIPGTT), and 276–279 (DTAG) contribute to the GTP site. Ser-236 lines the Mg(2+) pocket. Residues Thr-251, Ile-253, and Thr-256 each coordinate K(+). A Mg(2+)-binding site is contributed by Thr-257. Lys-460 serves as a coordination point for (6S)-5-formyl-5,6,7,8-tetrahydrofolate.

Belongs to the TRAFAC class TrmE-Era-EngA-EngB-Septin-like GTPase superfamily. TrmE GTPase family. Homodimer. Heterotetramer of two MnmE and two MnmG subunits. K(+) serves as cofactor.

It is found in the cytoplasm. Its function is as follows. Exhibits a very high intrinsic GTPase hydrolysis rate. Involved in the addition of a carboxymethylaminomethyl (cmnm) group at the wobble position (U34) of certain tRNAs, forming tRNA-cmnm(5)s(2)U34. The sequence is that of tRNA modification GTPase MnmE from Thermoanaerobacter pseudethanolicus (strain ATCC 33223 / 39E) (Clostridium thermohydrosulfuricum).